The chain runs to 405 residues: L-rhamnonate dehydratase (405 aa).

The substrate site is built by H33 and R59. The Mg(2+) site is built by D226, E252, and E280. Catalysis depends on H329, which acts as the Proton acceptor. Position 349 (E349) interacts with substrate.

Belongs to the mandelate racemase/muconate lactonizing enzyme family. RhamD subfamily. In terms of assembly, homooctamer; tetramer of dimers. Mg(2+) is required as a cofactor.

It carries out the reaction L-rhamnonate = 2-dehydro-3-deoxy-L-rhamnonate + H2O. In terms of biological role, catalyzes the dehydration of L-rhamnonate to 2-keto-3-deoxy-L-rhamnonate (KDR). Can also dehydrate L-lyxonate and L-mannonate, although less efficiently, but not 2-keto-4-hydroxyheptane-1,7-dioate. The sequence is that of L-rhamnonate dehydratase (rhmD) from Salmonella typhimurium (strain LT2 / SGSC1412 / ATCC 700720).